A 138-amino-acid polypeptide reads, in one-letter code: Large ribosomal subunit protein bL19 (138 aa).

The protein belongs to the bacterial ribosomal protein bL19 family.

In terms of biological role, this protein is located at the 30S-50S ribosomal subunit interface and may play a role in the structure and function of the aminoacyl-tRNA binding site. This is Large ribosomal subunit protein bL19 from Rickettsia peacockii (strain Rustic).